The following is a 171-amino-acid chain: Protein TIFY 11d (171 aa).

Residues 65–100 (PSAGTAPLTIFYDGRMVVVDDVPVEKAAELMRLAGS) form the Tify domain. Positions 117-142 (PIARKASLQRFLQKRKHRITTTSEPY) match the Jas motif. The Nuclear localization signal motif lies at 119–126 (ARKASLQR).

It belongs to the TIFY/JAZ family. As to quaternary structure, interacts with BHLH148 and COI1A. Interacts with COI1A, COI1B and COI2 in a coronatine-dependent manner. Coronatine is an analog of jasmonoyl isoleucine (JA-Ile). In terms of processing, ubiquitinated. Increase in jasmonoyl isoleucine (JA-Ile) levels mediates its degradation via COI1A-mediated proteasome pathway.

The protein resides in the nucleus. Its function is as follows. Repressor of jasmonate (JA) responses. May act on an initial response of JA-regulated gene expression toward drought tolerance as part of a BHLH148-TIFY11D/JAZ12-COI1A complex. This is Protein TIFY 11d from Oryza sativa subsp. japonica (Rice).